Consider the following 82-residue polypeptide: Penaeidin-3b (82 aa).

A signal peptide spans 1–19 (MRLVVCLVFLASFALVCQG). The residue at position 20 (Gln-20) is a Pyrrolidone carboxylic acid. 3 disulfide bridges follow: Cys-51-Cys-66, Cys-55-Cys-73, and Cys-67-Cys-74. Ser-81 bears the Serine amide mark.

This sequence belongs to the penaeidin family. Higher expression in hemocytes and to a lesser extent in heart, testis, gills, intestine, lymphoid organ and hepatopancreas. Traces in eyes and subcuticular epithelium. Not present in the brain.

It localises to the cytoplasmic granule. Antibacterial activity against M.luteus and E.coli bacteria. Antifungal activity against N.crassa and F.oxysporum. Presents chitin-binding activity. In Penaeus vannamei (Whiteleg shrimp), this protein is Penaeidin-3b.